Consider the following 706-residue polypeptide: Choline transporter-like protein 2 (706 aa).

The Cytoplasmic segment spans residues 1–33 (MGKDSQNYYGKHGTPQKYDPTFKGPIYNRGCTD). The residue at position 14 (threonine 14) is a Phosphothreonine. The chain crosses the membrane as a helical span at residues 34–54 (VICCVLLFLAIVGYVAVGIIA). At 55–232 (WTHGDPRKVI…QIFEDYTVSW (178 aa)) the chain is on the extracellular side. Asparagine 187 and asparagine 200 each carry an N-linked (GlcNAc...) asparagine glycan. Residues 233 to 253 (YWIIIGLVIAMVLSLLFIVLL) form a helical membrane-spanning segment. At 254 to 256 (RFL) the chain is on the cytoplasmic side. The helical transmembrane segment at 257–277 (AGIMVWVMIVMVILVLGYGIF) threads the bilayer. Over 278–315 (HCYMEYSRLRGEAGSDVSLVDLGFQTDLRVYLHLRQTW) the chain is Extracellular. Residues 316 to 336 (MAFMIILSILEVVIILLLIFL) traverse the membrane as a helical segment. Topologically, residues 337–364 (RKRILIAIALIKEASRAVGHVMCSLLYP) are cytoplasmic. A helical transmembrane segment spans residues 365-385 (LVTFFLLCLCIAYWASTSVFL). Topologically, residues 386–454 (STSNTAVYKV…LQIFNAFMFF (69 aa)) are extracellular. Asparagine 417 carries an N-linked (GlcNAc...) asparagine glycan. Residues 455–477 (WLANFVLALGQVTLAGAFASYYW) traverse the membrane as a helical segment. Residues 478–504 (AMRKPDDMPAFPLFSAFGRALRYHTGS) lie on the Cytoplasmic side of the membrane. Residues 505–525 (LAFGSLILAIVQIIRVMLEYL) form a helical membrane-spanning segment. Residues 526-563 (DQRLKAAQNKFAKFLMVCLKCCFWCLEKFIKFLNRNAY) are Extracellular-facing. A helical transmembrane segment spans residues 564 to 584 (IMIAIYGTNFCTSARNAFFLL). The Cytoplasmic segment spans residues 585-599 (MRNIIRVAVLDKVTD). Residues 600–620 (FLFLLGKLLIVGSVGILAFFF) form a helical membrane-spanning segment. At 621-638 (FTHRIRIVQDTAPPLNYY) the chain is on the extracellular side. Residues 639 to 659 (WVPILTVIIGSYLIAHGFFSV) form a helical membrane-spanning segment. Topologically, residues 660–706 (YGMCVDTLFLCFLEDLERNDGSAERPYFMSSTLKKLLNKTNKKVAES) are cytoplasmic.

The protein belongs to the CTL (choline transporter-like) family. In terms of assembly, interacts with COCH. Glycosylated, glycosylation differs from tissue to tissue. The molecular mass of the mature glycosylated protein is highest in kidney, followed by lung, colon and spleen, then brain and tongue. In terms of tissue distribution, expressed at high levels in lung, colon, inner ear and spleen (at protein level). Progressively lower levels in brain, tongue, liver and kidney (at protein level). In the kidney, prominent expression in glomeruli in the lining of Bowman's capsule and on the mesangial cells adjacent to the vessels within the glomerulus (at protein level). Strongly expressed on the membranes of splenocytes and in lung parenchyme (at protein level). As to expression, expressed at higher levels than isoform 2 in colon, heart, kidney, lung, cochlea, tongue and muscle, as well as in the inner ear. Predominantly expressed in brain, liver and spleen.

Its subcellular location is the cell membrane. It localises to the mitochondrion outer membrane. It catalyses the reaction choline(out) + n H(+)(in) = choline(in) + n H(+)(out). The enzyme catalyses ethanolamine(out) + n H(+)(in) = ethanolamine(in) + n H(+)(out). In terms of biological role, choline/H+ antiporter, mainly in mitochodria. Also acts as a low-affinity ethanolamine/H+ antiporter, regulating the supply of extracellular ethanolamine (Etn) for the CDP-Etn pathway, redistribute intracellular Etn and balance the CDP-Cho and CDP-Etn arms of the Kennedy pathway. The protein is Choline transporter-like protein 2 (Slc44a2) of Mus musculus (Mouse).